Consider the following 122-residue polypeptide: Large ribosomal subunit protein uL18 (122 aa).

This sequence belongs to the universal ribosomal protein uL18 family. In terms of assembly, part of the 50S ribosomal subunit; part of the 5S rRNA/L5/L18/L25 subcomplex. Contacts the 5S and 23S rRNAs.

Its function is as follows. This is one of the proteins that bind and probably mediate the attachment of the 5S RNA into the large ribosomal subunit, where it forms part of the central protuberance. The chain is Large ribosomal subunit protein uL18 from Dictyoglomus turgidum (strain DSM 6724 / Z-1310).